The following is a 309-amino-acid chain: Taste receptor type 2 member 20 (309 aa).

Residues 1–6 are Extracellular-facing; that stretch reads MMSFLH. A helical membrane pass occupies residues 7 to 27; the sequence is IVFSILVVVAFILGNFANGFI. Residues 28–46 are Cytoplasmic-facing; sequence ALINFIAWVKRQKISSADQ. The helical transmembrane segment at 47–67 threads the bilayer; it reads IIAALAVSRVGLLWVILLHWY. The Extracellular portion of the chain corresponds to 68 to 79; it reads STVLNPTSSNLK. A helical transmembrane segment spans residues 80–100; it reads VTIFISNAWAVTNHFSIWLAA. At 101-125 the chain is on the cytoplasmic side; it reads SLSIFYLLKIVNFSRLIFHHLKRKA. Residues 126–146 traverse the membrane as a helical segment; sequence KSVVLVIVLGSLFFLVCHLVM. The Extracellular segment spans residues 147 to 178; it reads KSTYINVWTEEYEGNVTWKIKLRNAMHLSNLT. Residues asparagine 161 and asparagine 176 are each glycosylated (N-linked (GlcNAc...) asparagine). Residues 179 to 199 form a helical membrane-spanning segment; it reads VAMLANLIPFTLTLISFLLLI. The Cytoplasmic segment spans residues 200 to 229; that stretch reads YSLCKHLKKMQLHGKGSQDPSTKIHIKALQ. A helical transmembrane segment spans residues 230-250; the sequence is TVTSFLILLAIYFLCLITSFW. The Extracellular segment spans residues 251 to 259; it reads NSKMRPKEI. The chain crosses the membrane as a helical span at residues 260 to 280; that stretch reads VLMLCQAFGIIYPSFHSFILI. Residues 281-309 are Cytoplasmic-facing; sequence WGNKTLKQTFLSVLWRVTCWAKGQNQSTP.

Belongs to the G-protein coupled receptor T2R family.

Its subcellular location is the membrane. Functionally, receptor that may play a role in the perception of bitterness and is gustducin-linked. May play a role in sensing the chemical composition of the gastrointestinal content. The activity of this receptor may stimulate alpha gustducin, mediate PLC-beta-2 activation and lead to the gating of TRPM5. This Gorilla gorilla gorilla (Western lowland gorilla) protein is Taste receptor type 2 member 20 (TAS2R20).